Consider the following 903-residue polypeptide: Pentatricopeptide repeat-containing protein At3g02330, mitochondrial (903 aa).

The N-terminal 31 residues, 1–31 (MAESLRLLHMTRSVVSFNRCLTEKISYRRVP), are a transit peptide targeting the mitochondrion. PPR repeat units follow at residues 47 to 81 (STTN…GFRP), 82 to 112 (TTFV…MPLR), 113 to 143 (DVVS…MPVR), 144 to 178 (DVVS…GIEF), 179 to 213 (DGRT…GCDT), 214 to 244 (DVVA…IPEK), 245 to 279 (NSVS…NAGV), 280 to 314 (SQSI…DFAA), 346 to 380 (NRQS…GLGF), 381 to 415 (DEIS…SLSL), 416 to 446 (DVCV…MRRR), 447 to 481 (DAVS…RIEP), 482 to 515 (DEFT…GMAS), 516 to 550 (NSSV…ANVS), 567 to 601 (MCVS…GITP), 602 to 636 (DKFT…ELQS), 637 to 667 (DVYI…SLRR), 668 to 702 (DFVT…NIKP), 703 to 738 (NHVT…GLDP), and 739 to 769 (QLPH…MPFE). The type E motif stretch occupies residues 774 to 850 (IWRTLLGVCT…EPGCSWVELK (77 aa)). Residues 851-881 (DELHVFLVGDKAHPRWEEIYEELGLIYSEMK) form a type E(+) motif region.

This sequence belongs to the PPR family. PCMP-E subfamily. As to quaternary structure, interacts with MORF1/RIP8.

Its subcellular location is the mitochondrion. Functionally, involved in C-to-U editing of mitochondrial RNA. Required for RNA editing at 8 sites in 6 different mRNAs in mitochondria. The protein is Pentatricopeptide repeat-containing protein At3g02330, mitochondrial (PCMP-E90) of Arabidopsis thaliana (Mouse-ear cress).